Reading from the N-terminus, the 120-residue chain is 5-hydroxyisourate hydrolase 2 (120 aa).

Substrate is bound by residues H10, R48, and Y117.

This sequence belongs to the transthyretin family. 5-hydroxyisourate hydrolase subfamily. As to quaternary structure, homotetramer.

It carries out the reaction 5-hydroxyisourate + H2O = 5-hydroxy-2-oxo-4-ureido-2,5-dihydro-1H-imidazole-5-carboxylate + H(+). Its function is as follows. Catalyzes the hydrolysis of 5-hydroxyisourate (HIU) to 2-oxo-4-hydroxy-4-carboxy-5-ureidoimidazoline (OHCU). This Rhizobium meliloti (strain 1021) (Ensifer meliloti) protein is 5-hydroxyisourate hydrolase 2.